A 201-amino-acid polypeptide reads, in one-letter code: GTP cyclohydrolase 1 (201 aa).

The disordered stretch occupies residues 1–20 (MDATVKKMSPETSRPSREEA). Zn(2+)-binding residues include cysteine 91, histidine 94, and cysteine 162.

The protein belongs to the GTP cyclohydrolase I family. As to quaternary structure, homomer.

The catalysed reaction is GTP + H2O = 7,8-dihydroneopterin 3'-triphosphate + formate + H(+). It functions in the pathway cofactor biosynthesis; 7,8-dihydroneopterin triphosphate biosynthesis; 7,8-dihydroneopterin triphosphate from GTP: step 1/1. This Allorhizobium ampelinum (strain ATCC BAA-846 / DSM 112012 / S4) (Agrobacterium vitis (strain S4)) protein is GTP cyclohydrolase 1.